The chain runs to 312 residues: Aspartate carbamoyltransferase catalytic subunit (312 aa).

2 residues coordinate carbamoyl phosphate: Arg58 and Thr59. Lys86 provides a ligand contact to L-aspartate. Residues Arg108, His136, and Gln139 each coordinate carbamoyl phosphate. L-aspartate-binding residues include Arg169 and Arg223. 2 residues coordinate carbamoyl phosphate: Gly264 and Pro265.

The protein belongs to the aspartate/ornithine carbamoyltransferase superfamily. ATCase family. As to quaternary structure, heterododecamer (2C3:3R2) of six catalytic PyrB chains organized as two trimers (C3), and six regulatory PyrI chains organized as three dimers (R2).

It catalyses the reaction carbamoyl phosphate + L-aspartate = N-carbamoyl-L-aspartate + phosphate + H(+). It participates in pyrimidine metabolism; UMP biosynthesis via de novo pathway; (S)-dihydroorotate from bicarbonate: step 2/3. Functionally, catalyzes the condensation of carbamoyl phosphate and aspartate to form carbamoyl aspartate and inorganic phosphate, the committed step in the de novo pyrimidine nucleotide biosynthesis pathway. In Desulforamulus reducens (strain ATCC BAA-1160 / DSM 100696 / MI-1) (Desulfotomaculum reducens), this protein is Aspartate carbamoyltransferase catalytic subunit.